We begin with the raw amino-acid sequence, 582 residues long: DNA mismatch repair protein MutL (582 aa).

It belongs to the DNA mismatch repair MutL/HexB family.

Functionally, this protein is involved in the repair of mismatches in DNA. It is required for dam-dependent methyl-directed DNA mismatch repair. May act as a 'molecular matchmaker', a protein that promotes the formation of a stable complex between two or more DNA-binding proteins in an ATP-dependent manner without itself being part of a final effector complex. This is DNA mismatch repair protein MutL from Buchnera aphidicola subsp. Schizaphis graminum (strain Sg).